The following is a 122-amino-acid chain: Large ribosomal subunit protein uL14 (122 aa).

This sequence belongs to the universal ribosomal protein uL14 family. As to quaternary structure, part of the 50S ribosomal subunit. Forms a cluster with proteins L3 and L19. In the 70S ribosome, L14 and L19 interact and together make contacts with the 16S rRNA in bridges B5 and B8.

Functionally, binds to 23S rRNA. Forms part of two intersubunit bridges in the 70S ribosome. In Paenarthrobacter aurescens (strain TC1), this protein is Large ribosomal subunit protein uL14.